We begin with the raw amino-acid sequence, 634 residues long: 1-deoxy-D-xylulose-5-phosphate synthase (634 aa).

Thiamine diphosphate-binding positions include H79 and 120 to 122; that span reads GHA. D151 serves as a coordination point for Mg(2+). Residues 152 to 153, N180, Y292, and E376 contribute to the thiamine diphosphate site; that span reads GS. N180 serves as a coordination point for Mg(2+).

This sequence belongs to the transketolase family. DXPS subfamily. As to quaternary structure, homodimer. Requires Mg(2+) as cofactor. It depends on thiamine diphosphate as a cofactor.

It catalyses the reaction D-glyceraldehyde 3-phosphate + pyruvate + H(+) = 1-deoxy-D-xylulose 5-phosphate + CO2. The protein operates within metabolic intermediate biosynthesis; 1-deoxy-D-xylulose 5-phosphate biosynthesis; 1-deoxy-D-xylulose 5-phosphate from D-glyceraldehyde 3-phosphate and pyruvate: step 1/1. In terms of biological role, catalyzes the acyloin condensation reaction between C atoms 2 and 3 of pyruvate and glyceraldehyde 3-phosphate to yield 1-deoxy-D-xylulose-5-phosphate (DXP). The polypeptide is 1-deoxy-D-xylulose-5-phosphate synthase (Porphyromonas gingivalis (strain ATCC BAA-308 / W83)).